Reading from the N-terminus, the 153-residue chain is Catabolic 3-dehydroquinase (153 aa).

Tyr-24 acts as the Proton acceptor in catalysis. Positions 75, 81, and 88 each coordinate substrate. His-101 serves as the catalytic Proton donor. Residues Val-102–Ser-103 and Arg-112 contribute to the substrate site.

This sequence belongs to the type-II 3-dehydroquinase family. As to quaternary structure, homododecamer. Adopts a ring-like structure, composed of an arrangement of two hexameric rings stacked on top of one another.

It carries out the reaction 3-dehydroquinate = 3-dehydroshikimate + H2O. It participates in aromatic compound metabolism; 3,4-dihydroxybenzoate biosynthesis; 3,4-dihydroxybenzoate from 3-dehydroquinate: step 1/2. Is involved in the catabolism of quinate. Allows the utilization of quinate as carbon source via the beta-ketoadipate pathway. This is Catabolic 3-dehydroquinase from Emericella nidulans (strain FGSC A4 / ATCC 38163 / CBS 112.46 / NRRL 194 / M139) (Aspergillus nidulans).